A 399-amino-acid polypeptide reads, in one-letter code: Subtilisin-like protease 4 (399 aa).

The signal sequence occupies residues Met1–Ala19. Positions Arg20–Ser118 are excised as a propeptide. One can recognise an Inhibitor I9 domain in the interval Tyr38–Ile117. Asn102 is a glycosylation site (N-linked (GlcNAc...) asparagine). The 272-residue stretch at Ser128–Gln399 folds into the Peptidase S8 domain. Active-site charge relay system residues include Asp160 and His191. N-linked (GlcNAc...) asparagine glycans are attached at residues Asn252 and Asn308. The active-site Charge relay system is Ser346. N-linked (GlcNAc...) asparagine glycosylation occurs at Asn395.

It belongs to the peptidase S8 family.

It is found in the secreted. Functionally, secreted subtilisin-like serine protease with keratinolytic activity that contributes to pathogenicity. This chain is Subtilisin-like protease 4 (SUB4), found in Trichophyton rubrum (Athlete's foot fungus).